We begin with the raw amino-acid sequence, 327 residues long: Methionyl-tRNA formyltransferase (327 aa).

Position 113 to 116 (113 to 116 (SILP)) interacts with (6S)-5,6,7,8-tetrahydrofolate.

Belongs to the Fmt family.

The catalysed reaction is L-methionyl-tRNA(fMet) + (6R)-10-formyltetrahydrofolate = N-formyl-L-methionyl-tRNA(fMet) + (6S)-5,6,7,8-tetrahydrofolate + H(+). In terms of biological role, attaches a formyl group to the free amino group of methionyl-tRNA(fMet). The formyl group appears to play a dual role in the initiator identity of N-formylmethionyl-tRNA by promoting its recognition by IF2 and preventing the misappropriation of this tRNA by the elongation apparatus. In Colwellia psychrerythraea (strain 34H / ATCC BAA-681) (Vibrio psychroerythus), this protein is Methionyl-tRNA formyltransferase.